Here is a 416-residue protein sequence, read N- to C-terminus: PRKCA-binding protein (416 aa).

Residues 22–105 enclose the PDZ domain; the sequence is KVTLQKDAQN…EVTIHYNKLQ (84 aa). The Zn(2+) site is built by C44 and C46. T82 carries the phosphothreonine modification. Residues 144–357 enclose the AH domain; it reads LCNDGLVKRL…CYAVLRDADV (214 aa). The interval 373–416 is disordered; the sequence is PNQGGFTDGEDEEEEEEDGAAREVSKDARGATGPTDKGGSWCDS. The span at 380 to 390 shows a compositional bias: acidic residues; it reads DGEDEEEEEED. Residues 391 to 401 are compositionally biased toward basic and acidic residues; it reads GAAREVSKDAR. C414 is lipidated: S-palmitoyl cysteine; by DHHC8.

Monomer and homodimer. Interacts with CXADR. Interacts presynaptically with the glutamate receptors GRIA2, GRIA3, GRIK3, isoform 3 of GRIA4, isoform A of GRM4, GRM7 and GRM8; with NAPA and NAPB; and with BTG2. The interaction with NAPA and NAPB disrupts the interaction with GRIA2, conducting to the internalization of GRIA2. Interacts with PRKCA; with the amine transporters SLC6A2 and SLC6A3; with the channels ASIC1 and ASIC2; with the GTP-binding proteins ARF1 and ARF3; with the ephrin receptor tyrosine kinases EPHA7, EPHB1 and EPHB2; with ERBB2 and through its PDZ domain with the C-terminal tail of PRLHR. Interacts with UNC5A. Interacts (via AH domain) with NCS1/FREQ; in a calcium-dependent manner. Interacts with F-actin and associates with the ARP2/3 complex. Interacts (via PDZ domain) with ARF1 (activated); the interaction blocks Arp2/3 complex inhibition. Interacts with SORCS3. Phosphorylation at Thr-82 appears to inhibit the interaction with AMPA receptors. In terms of processing, palmitoylation on Cys-414 is essential for long-term synaptic depression (LTD). As to expression, ubiquitous.

It is found in the cytoplasm. It localises to the perinuclear region. Its subcellular location is the membrane. The protein resides in the postsynaptic density. The protein localises to the synapse. It is found in the synaptosome. It localises to the cytoskeleton. Its function is as follows. Probable adapter protein that bind to and organize the subcellular localization of a variety of membrane proteins containing some PDZ recognition sequence. Involved in the clustering of various receptors, possibly by acting at the receptor internalization level. Plays a role in synaptic plasticity by regulating the trafficking and internalization of AMPA receptors. May be regulated upon PRKCA activation. May regulate ASIC1/ASIC3 channel. Regulates actin polymerization by inhibiting the actin-nucleating activity of the Arp2/3 complex; the function is competitive with nucleation promoting factors and is linked to neuronal morphology regulation and AMPA receptor (AMPAR) endocytosis. Via interaction with the Arp2/3 complex involved in regulation of synaptic plasicity of excitatory synapses and required for spine shrinkage during long-term depression (LTD). Involved in regulation of astrocyte morphology, antagonistic to Arp2/3 complex activator WASL/N-WASP function. The polypeptide is PRKCA-binding protein (Pick1) (Rattus norvegicus (Rat)).